The chain runs to 138 residues: Transcription antitermination protein NusB (138 aa).

Belongs to the NusB family.

Its function is as follows. Involved in transcription antitermination. Required for transcription of ribosomal RNA (rRNA) genes. Binds specifically to the boxA antiterminator sequence of the ribosomal RNA (rrn) operons. This chain is Transcription antitermination protein NusB, found in Blochmanniella floridana.